The sequence spans 201 residues: 3-isopropylmalate dehydratase small subunit (201 aa).

Belongs to the LeuD family. LeuD type 1 subfamily. In terms of assembly, heterodimer of LeuC and LeuD.

The catalysed reaction is (2R,3S)-3-isopropylmalate = (2S)-2-isopropylmalate. Its pathway is amino-acid biosynthesis; L-leucine biosynthesis; L-leucine from 3-methyl-2-oxobutanoate: step 2/4. Catalyzes the isomerization between 2-isopropylmalate and 3-isopropylmalate, via the formation of 2-isopropylmaleate. The chain is 3-isopropylmalate dehydratase small subunit from Salmonella paratyphi A (strain ATCC 9150 / SARB42).